Here is a 355-residue protein sequence, read N- to C-terminus: Putative arylamide transporter (355 aa).

6 consecutive transmembrane segments (helical) span residues 22–42, 44–64, 71–91, 92–112, 119–139, and 150–170; these read TVLW…YLTH, VFNH…MSAT, RAQQ…GVHA, LLGS…SVAV, VAQG…VLVF, and LFDA…LFPP.

It localises to the cell membrane. May be involved in the import of arylamide compounds. The sequence is that of Putative arylamide transporter from Mycobacterium bovis (strain ATCC BAA-935 / AF2122/97).